We begin with the raw amino-acid sequence, 879 residues long: DNA double-strand break repair Rad50 ATPase (879 aa).

ATP is bound by residues 32-38 and Gln139; that span reads NGAGKSS. 2 coiled-coil regions span residues 184–304 and 342–436; these read IELQ…NKIK and EIKG…NQVK. Residues 394 to 492 form the Zinc-hook domain; that stretch reads LQKLNEDLNN…LISELNQIIN (99 aa). Residues Cys440 and Cys443 each contribute to the Zn(2+) site. The stretch at 502–722 forms a coiled coil; that stretch reads IRNLADYNNL…LITAYDKLKK (221 aa). Residue 786–791 participates in ATP binding; sequence LLSGGE.

It belongs to the SMC family. RAD50 subfamily. In terms of assembly, homodimer. Forms a heterotetramer composed of two Mre11 subunits and two Rad50 subunits. Zn(2+) serves as cofactor.

Its function is as follows. Part of the Rad50/Mre11 complex, which is involved in the early steps of DNA double-strand break (DSB) repair. The complex may facilitate opening of the processed DNA ends to aid in the recruitment of HerA and NurA. Rad50 controls the balance between DNA end bridging and DNA resection via ATP-dependent structural rearrangements of the Rad50/Mre11 complex. The chain is DNA double-strand break repair Rad50 ATPase from Sulfurisphaera tokodaii (strain DSM 16993 / JCM 10545 / NBRC 100140 / 7) (Sulfolobus tokodaii).